The chain runs to 333 residues: Receptor polysaccharide phosphotransferase WefC (333 aa).

This sequence belongs to the stealth family.

Functionally, part of the type 2Gn receptor polysaccharide (RPS) biosynthesis locus. Essential for cell surface RPS production, and for synthesis of the host-like GalNAc beta 1-3Gal (Gn) motif of the RPS. Probably encodes a 1-3Gal alpha transferase. The polypeptide is Receptor polysaccharide phosphotransferase WefC (wefC) (Streptococcus gordonii).